A 680-amino-acid chain; its full sequence is Tumor protein 63 (680 aa).

The segment at 1–107 (MNFETSRCAT…MQDSDLSDPM (107 aa)) is transcription activation. The segment covering 122–157 (QQIQNGSSSTSPYNTDHAQNSVTAPSPYAQPSSTFD) has biased composition (polar residues). Residues 122–171 (QQIQNGSSSTSPYNTDHAQNSVTAPSPYAQPSSTFDALSPSPAIPSNTDY) form a disordered region. A DNA-binding region spans residues 170–362 (DYPGPHSFDV…KADEDSIRKQ (193 aa)). Zn(2+) is bound by residues C244, H247, C308, and C312. The span at 351–360 (DRKADEDSIR) shows a compositional bias: basic and acidic residues. Disordered regions lie at residues 351–393 (DRKA…IKKR) and 436–472 (RQQQQQQHQHLLQKQTSMQSQSSYGNSSPPLNKMNSM). The segment at 352 to 388 (RKADEDSIRKQQVSDSAKNGDGTKRPFRQNTHGIQMT) is interaction with HIPK2. Residues 379–389 (RQNTHGIQMTS) show a composition bias toward polar residues. The tract at residues 394-443 (RSPDDELLYLPVRGRETYEMLLKIKESLELMQYLPQHTIETYRQQQQQQH) is oligomerization. The span at 437–463 (QQQQQQHQHLLQKQTSMQSQSSYGNSS) shows a compositional bias: low complexity. Positions 541–607 (PPYPTDCSIV…WKGILDHRQL (67 aa)) constitute an SAM domain. The tract at residues 610-680 (FSSPPHLLRT…KQQRIKEEGE (71 aa)) is transactivation inhibition. K676 is covalently cross-linked (Glycyl lysine isopeptide (Lys-Gly) (interchain with G-Cter in SUMO)).

It belongs to the p53 family. Binds DNA as a homotetramer. Isoform composition of the tetramer may determine transactivation activity. Interacts with HIPK2. Interacts with SSRP1, leading to stimulate coactivator activity. Interacts with WWP1. Interacts with PDS5A. Interacts (via activation domain) with NOC2L. It depends on Zn(2+) as a cofactor. In terms of processing, may be sumoylated. Post-translationally, ubiquitinated. Polyubiquitination involves WWP1 and leads to proteasomal degradation of this protein. In terms of tissue distribution, widely expressed, notably in thymus, prostate, placenta, and skeletal muscle, although the precise isoform varies according to tissue type. Progenitor cell layers of skin, breast and prostate express high levels of DeltaN-type isoforms.

The protein localises to the nucleus. In terms of biological role, acts as a sequence specific DNA binding transcriptional activator or repressor. The isoforms contain a varying set of transactivation and auto-regulating transactivation inhibiting domains thus showing an isoform specific activity. May be required in conjunction with TP73/p73 for initiation of p53/TP53 dependent apoptosis in response to genotoxic insults and the presence of activated oncogenes. Involved in Notch signaling by probably inducing JAG1 and JAG2. Activates RIPK4 transcription. Plays a role in the regulation of epithelial morphogenesis. The ratio of DeltaN-type and TA*-type isoforms may govern the maintenance of epithelial stem cell compartments and regulate the initiation of epithelial stratification from the undifferentiated embryonal ectoderm. Required for limb formation from the apical ectodermal ridge. Activates transcription of the p21 promoter. The polypeptide is Tumor protein 63 (Tp63) (Rattus norvegicus (Rat)).